Consider the following 187-residue polypeptide: uncharacterized protein (187 aa).

The N-terminal stretch at 1-25 (MSKFVKTAIAAAMVMGAFTSTATIA) is a signal peptide.

Belongs to the fimbrial protein family.

Functionally, part of the yfcOPQRSUV fimbrial operon. Could contribute to adhesion to various surfaces in specific environmental niches. Increases adhesion to eukaryotic T24 bladder epithelial cells in the absence of fim genes. This is an uncharacterized protein from Escherichia coli (strain K12).